The primary structure comprises 414 residues: Arrestin domain-containing protein 3 (414 aa).

2 short sequence motifs (PPxY motif) span residues 346–349 (PPSY) and 391–394 (PPLY). Residues 393-414 (LYSEIDPNPDQSADDRPSCPSR) are disordered. Residues 405-414 (ADDRPSCPSR) show a composition bias toward basic and acidic residues.

The protein belongs to the arrestin family. In terms of assembly, interacts (via PPxY motifs) with NEDD4 (via WW domains). Interacts with ADRB2. Interacts with ADRB3. Interacts with HGS (via PPxY motifs). Does not bind TXN (thioredoxin). Interacts with ITCH. Interacts with WWP1 (via WW domains). As to expression, highly expressed in skeletal muscle, placenta, kidney, lung, liver, blood, adrenal gland, lymph node, mammary gland, thyroid, and trachea. Very low levels in colon, thymus, spleen, small intestine, bladder and bone marrow. Strong expression in differentiated adipocytes compared to preadipocytes. Detected in omental fat and subcutaneous fat tissue.

The protein resides in the cytoplasm. The protein localises to the cell membrane. Its subcellular location is the lysosome. It is found in the endosome. It localises to the early endosome. Adapter protein that plays a role in regulating cell-surface expression of adrenergic receptors and probably also other G protein-coupled receptors. Plays a role in NEDD4-mediated ubiquitination and endocytosis af activated ADRB2 and subsequent ADRB2 degradation. May recruit NEDD4 to ADRB2. Alternatively, may function as adapter protein that does not play a major role in recruiting NEDD4 to ADRB2, but rather plays a role in a targeting ADRB2 to endosomes. The sequence is that of Arrestin domain-containing protein 3 (ARRDC3) from Homo sapiens (Human).